The primary structure comprises 37 residues: Delta-amaurobitoxin-Pl1a (37 aa).

4 disulfides stabilise this stretch: C2-C18, C9-C23, C17-C33, and C25-C31. Residue S37 is modified to Serine amide.

This sequence belongs to the neurotoxin 07 (Beta/delta-agtx) family. 02 (aga-3) subfamily. In terms of tissue distribution, expressed by the venom gland.

It localises to the secreted. Its function is as follows. Binds at site 4 of sodium channels (Nav) and inhibits the fast inactivation of cockroach channels. This toxin is active only on insects. Has a potent activity against S.litura larvae. The protein is Delta-amaurobitoxin-Pl1a of Pireneitega luctuosa (Tangled nest spider).